A 106-amino-acid polypeptide reads, in one-letter code: Glutaredoxin-1 (106 aa).

Position 2 is an N-acetylalanine (Ala-2). Positions 3-106 (QEFVNCKIQP…TRLKQIGALQ (104 aa)) constitute a Glutaredoxin domain. Lys-9 bears the N6-succinyllysine mark. Disulfide bonds link Cys-23-Cys-26 and Cys-79-Cys-83.

It belongs to the glutaredoxin family.

The protein resides in the cytoplasm. Its function is as follows. Has a glutathione-disulfide oxidoreductase activity in the presence of NADPH and glutathione reductase. Reduces low molecular weight disulfides and proteins. The chain is Glutaredoxin-1 (GLRX) from Homo sapiens (Human).